The following is a 339-amino-acid chain: ATPase GET3 (339 aa).

34 to 41 contributes to the ATP binding site; sequence KGGVGKTT. Asp-63 is an active-site residue. Residues Glu-244 and Asn-271 each coordinate ATP. Cys-282 and Cys-285 together coordinate Zn(2+).

This sequence belongs to the arsA ATPase family. Homodimer.

The protein resides in the cytoplasm. Its subcellular location is the endoplasmic reticulum. Functionally, ATPase required for the post-translational delivery of tail-anchored (TA) proteins to the endoplasmic reticulum. Recognizes and selectively binds the transmembrane domain of TA proteins in the cytosol. This complex then targets to the endoplasmic reticulum by membrane-bound receptors, where the tail-anchored protein is released for insertion. This process is regulated by ATP binding and hydrolysis. ATP binding drives the homodimer towards the closed dimer state, facilitating recognition of newly synthesized TA membrane proteins. ATP hydrolysis is required for insertion. Subsequently, the homodimer reverts towards the open dimer state, lowering its affinity for the membrane-bound receptor, and returning it to the cytosol to initiate a new round of targeting. The polypeptide is ATPase GET3 (Podospora anserina (strain S / ATCC MYA-4624 / DSM 980 / FGSC 10383) (Pleurage anserina)).